We begin with the raw amino-acid sequence, 382 residues long: Dodecanoyl-[acyl-carrier-protein] hydrolase, chloroplastic (382 aa).

The N-terminal 83 residues, Met-1–Asn-83, are a transit peptide targeting the chloroplast. Residues Asn-283, His-285, and Cys-320 contribute to the active site.

This sequence belongs to the acyl-ACP thioesterase family.

The protein resides in the plastid. It is found in the chloroplast. It catalyses the reaction dodecanoyl-[ACP] + H2O = dodecanoate + holo-[ACP] + H(+). In terms of biological role, plays an essential role in chain termination during de novo fatty acid synthesis. High thioesterase activity for myristoyl-ACP. This Cinnamomum camphora (Camphor tree) protein is Dodecanoyl-[acyl-carrier-protein] hydrolase, chloroplastic.